A 199-amino-acid chain; its full sequence is Probable GTP-binding protein EngB (199 aa).

The EngB-type G domain occupies 28–199; sequence DLPEIALAGR…DSWDAILEQV (172 aa). Residues 36–43, 63–67, 81–84, 148–151, and 180–182 each bind GTP; these read GRSNVGKS, GKTQL, DVPG, TKAD, and FSS. Mg(2+) contacts are provided by serine 43 and threonine 65.

The protein belongs to the TRAFAC class TrmE-Era-EngA-EngB-Septin-like GTPase superfamily. EngB GTPase family. It depends on Mg(2+) as a cofactor.

Its function is as follows. Necessary for normal cell division and for the maintenance of normal septation. The polypeptide is Probable GTP-binding protein EngB (Streptococcus pyogenes serotype M6 (strain ATCC BAA-946 / MGAS10394)).